The sequence spans 242 residues: ATP synthase subunit a (242 aa).

7 helical membrane-spanning segments follow: residues 23 to 43, 62 to 82, 84 to 104, 113 to 133, 143 to 163, 176 to 196, and 201 to 221; these read ISFTNCALFMILASLVSAVLL, VELIYNFVVGAIESNAGVGGL, YIPFVLSIFLFVLACNIIGIL, HVSVTLALSVVVCASVTVLGF, IFLPEGTPLWLAPMMVFIKLF, LAANMIAGHTIIAVIAEFVLK, and LAPLPFAFIMVLIAFEIFVAI.

Belongs to the ATPase A chain family. In terms of assembly, F-type ATPases have 2 components, CF(1) - the catalytic core - and CF(0) - the membrane proton channel. CF(1) has five subunits: alpha(3), beta(3), gamma(1), delta(1), epsilon(1). CF(0) has three main subunits: a(1), b(2) and c(9-12). The alpha and beta chains form an alternating ring which encloses part of the gamma chain. CF(1) is attached to CF(0) by a central stalk formed by the gamma and epsilon chains, while a peripheral stalk is formed by the delta and b chains.

It is found in the cell inner membrane. Functionally, key component of the proton channel; it plays a direct role in the translocation of protons across the membrane. This is ATP synthase subunit a from Anaplasma phagocytophilum (strain HZ).